The sequence spans 134 residues: Small ribosomal subunit protein uS9 (134 aa).

A disordered region spans residues 109 to 134 (DARRTEPHKPSKSSKGPRAKRQKSYR). Over residues 118–134 (PSKSSKGPRAKRQKSYR) the composition is skewed to basic residues.

The protein belongs to the universal ribosomal protein uS9 family.

The protein is Small ribosomal subunit protein uS9 of Methanococcus maripaludis (strain DSM 14266 / JCM 13030 / NBRC 101832 / S2 / LL).